The sequence spans 669 residues: Zinc finger MYM-type protein 5 (669 aa).

Residues Lys-88, Lys-91, Lys-134, Lys-149, Lys-166, and Lys-225 each participate in a glycyl lysine isopeptide (Lys-Gly) (interchain with G-Cter in SUMO2) cross-link. 4 MYM-type zinc fingers span residues 265–299 (HLFC…KKAN), 311–351 (QEFY…RHEV), 358–393 (HKLC…KSTG), and 404–431 (KRFC…ASEN). Residues Lys-443, Lys-455, Lys-462, and Lys-552 each participate in a glycyl lysine isopeptide (Lys-Gly) (interchain with G-Cter in SUMO2) cross-link.

As to quaternary structure, interacts (via N-terminal 120 amino acid region) with ETV5 (via C-terminal).

The protein localises to the nucleus. In terms of biological role, functions as a transcriptional regulator. This Homo sapiens (Human) protein is Zinc finger MYM-type protein 5 (ZMYM5).